Reading from the N-terminus, the 699-residue chain is Elongation factor G (699 aa).

Positions glutamate 8–isoleucine 283 constitute a tr-type G domain. GTP contacts are provided by residues alanine 17 to threonine 24, aspartate 81 to histidine 85, and asparagine 135 to aspartate 138.

The protein belongs to the TRAFAC class translation factor GTPase superfamily. Classic translation factor GTPase family. EF-G/EF-2 subfamily.

The protein localises to the cytoplasm. In terms of biological role, catalyzes the GTP-dependent ribosomal translocation step during translation elongation. During this step, the ribosome changes from the pre-translocational (PRE) to the post-translocational (POST) state as the newly formed A-site-bound peptidyl-tRNA and P-site-bound deacylated tRNA move to the P and E sites, respectively. Catalyzes the coordinated movement of the two tRNA molecules, the mRNA and conformational changes in the ribosome. The chain is Elongation factor G from Rickettsia rickettsii.